The following is a 492-amino-acid chain: Trypanothione reductase (492 aa).

36–52 (DVQMVHGPPFFSALGGT) lines the FAD pocket. Cys-53 and Cys-58 are disulfide-bonded. The Proton acceptor role is filled by His-461.

The protein belongs to the class-I pyridine nucleotide-disulfide oxidoreductase family. In terms of assembly, homodimer. FAD is required as a cofactor.

It is found in the cytoplasm. It catalyses the reaction trypanothione + NADP(+) = trypanothione disulfide + NADPH + H(+). Its function is as follows. Trypanothione is the parasite analog of glutathione; this enzyme is the equivalent of glutathione reductase. The protein is Trypanothione reductase (TPR) of Trypanosoma cruzi.